We begin with the raw amino-acid sequence, 428 residues long: Monocarboxylate transporter 13 (428 aa).

Residues 1–10 (MVHRTEPPDG) are Cytoplasmic-facing. A run of 12 helical transmembrane segments spans residues 11-31 (GWGW…FGVL), 52-72 (VSWI…IGSA), 81-101 (PVVM…SFAT), 106-126 (LYLS…TPTL), 139-159 (LAMG…APLF), 172-192 (LLLV…LRPL), 221-241 (VALT…VAHL), 244-264 (LGWD…SDLV), 283-303 (LLML…VAQA), 309-329 (VLAV…FSVI), 338-358 (IYCG…LGAP), and 374-394 (FVVA…LPHF). Over 395-428 (FSCISLSTSRPQDLVIEAPDTKIPLPKEEGLGEN) the chain is Cytoplasmic.

The protein belongs to the major facilitator superfamily. Monocarboxylate porter (TC 2.A.1.13) family.

The protein localises to the golgi apparatus membrane. It is found in the cell membrane. Proton-linked monocarboxylate transporter. May catalyze the transport of monocarboxylates across the plasma membrane. The sequence is that of Monocarboxylate transporter 13 (Slc16a13) from Rattus norvegicus (Rat).